The sequence spans 469 residues: Fe(3+)-Zn(2+) purple acid phosphatase 12 (469 aa).

Positions Met-1–Gly-28 are cleaved as a signal peptide. Asn-114 carries an N-linked (GlcNAc...) asparagine glycan. Asp-168 is a binding site for Fe cation. Asn-176 is a glycosylation site (N-linked (GlcNAc...) asparagine). The Fe cation site is built by Asp-197 and Tyr-200. Asp-197 contacts Zn(2+). Asn-234 contacts Zn(2+). Residue Asn-234 coordinates substrate. Residue Asn-307 is glycosylated (N-linked (GlcNAc...) asparagine). His-319 lines the Zn(2+) pocket. His-329 serves as the catalytic Proton donor. His-356 lines the Zn(2+) pocket. His-356 to His-358 provides a ligand contact to substrate. Position 358 (His-358) interacts with Fe cation. Asn-429 carries N-linked (GlcNAc...) asparagine glycosylation.

The protein belongs to the metallophosphoesterase superfamily. Purple acid phosphatase family. Homodimer; disulfide-linked. Fe cation serves as cofactor. It depends on Zn(2+) as a cofactor. In terms of tissue distribution, expressed in roots, stems, leaves, flowers and siliques.

The protein resides in the secreted. It carries out the reaction a phosphate monoester + H2O = an alcohol + phosphate. The sequence is that of Fe(3+)-Zn(2+) purple acid phosphatase 12 (PAP12) from Arabidopsis thaliana (Mouse-ear cress).